A 424-amino-acid chain; its full sequence is MVSEVTLDKSRQMYEKAKTLIPGGVSSPVRAIKPYPFYTASADGSKIRDLDGNEYIDYCLAYGPAVLGHNHPVIKAAIKEQLDKGWLYGTPTELEVTLAEKVAGYYPSIDMLRFVSTGTEATMSALRLARGFTRKNKFIKIEGGFHGAHDAVLVKAGSGATTLGEPDSLGIPADFTKYTLQAPYNDIETMTTLVEKNRDDLAAVIIEPVLGNIGPILPLPGYLKELRKLTKENDVLLIFDEVITGFRLAMGGAQEYFGVVPDMTTLGKIVGGGLPIGVFGGRREIMEMIAPSGAVYQAGTFSGSPCSVAAGIAVLDYLKKEDIHAKLNSTGDYMRAVVSEIVEDEGLDYTVCGIASMFKIFFGAEPHNYQEALKCDKEGYLSFFHRMLANGVFLPPSQFETNFISAAHSEEDIEKTLEAYVENL.

Position 268 is an N6-(pyridoxal phosphate)lysine (Lys-268).

It belongs to the class-III pyridoxal-phosphate-dependent aminotransferase family. HemL subfamily. It depends on pyridoxal 5'-phosphate as a cofactor.

Its subcellular location is the cytoplasm. It catalyses the reaction (S)-4-amino-5-oxopentanoate = 5-aminolevulinate. It participates in porphyrin-containing compound metabolism; protoporphyrin-IX biosynthesis; 5-aminolevulinate from L-glutamyl-tRNA(Glu): step 2/2. The polypeptide is Glutamate-1-semialdehyde 2,1-aminomutase (Methanosarcina acetivorans (strain ATCC 35395 / DSM 2834 / JCM 12185 / C2A)).